The following is a 61-amino-acid chain: Copper metallothionein 1-1 (61 aa).

A propeptide spanning residues Met1–Phe8 is cleaved from the precursor. Cu cation-binding residues include Cys15, Cys17, Cys19, Cys22, and Cys28. Residue Lys30 forms a Glycyl lysine isopeptide (Lys-Gly) (interchain with G-Cter in ubiquitin) linkage. Cys32, Cys34, Cys38, Cys44, and Cys46 together coordinate Cu cation. The segment at Gly37–Lys61 is disordered. Basic and acidic residues predominate over residues Ser40–Lys55.

The protein belongs to the metallothionein superfamily. Type 12 family.

Functionally, protects the cell against copper toxicity by tightly chelating copper ions. May also act as a depository for copper designated for the effective transfer into the apo forms of copper proteins. The protein is Copper metallothionein 1-1 (CUP1-1) of Saccharomyces cerevisiae (strain ATCC 204508 / S288c) (Baker's yeast).